Here is a 166-residue protein sequence, read N- to C-terminus: Endoribonuclease YbeY (166 aa).

Zn(2+)-binding residues include His-126, His-130, and His-136.

Belongs to the endoribonuclease YbeY family. Zn(2+) is required as a cofactor.

The protein localises to the cytoplasm. Single strand-specific metallo-endoribonuclease involved in late-stage 70S ribosome quality control and in maturation of the 3' terminus of the 16S rRNA. In Laribacter hongkongensis (strain HLHK9), this protein is Endoribonuclease YbeY.